Reading from the N-terminus, the 156-residue chain is Holliday junction resolvase (156 aa).

Belongs to the RuvC family. Poxviruses-type subfamily. Mg(2+) serves as cofactor.

Functionally, nuclease that specifically cleaves and resolves four-way DNA Holliday junctions into linear duplex products. The polypeptide is Holliday junction resolvase (Vertebrata (FPV)).